Reading from the N-terminus, the 239-residue chain is 7-cyano-7-deazaguanine synthase (239 aa).

Leucine 13–alanine 23 is a binding site for ATP. Zn(2+) contacts are provided by cysteine 193, cysteine 203, cysteine 206, and cysteine 209.

Belongs to the QueC family. Zn(2+) serves as cofactor.

It catalyses the reaction 7-carboxy-7-deazaguanine + NH4(+) + ATP = 7-cyano-7-deazaguanine + ADP + phosphate + H2O + H(+). It functions in the pathway purine metabolism; 7-cyano-7-deazaguanine biosynthesis. Catalyzes the ATP-dependent conversion of 7-carboxy-7-deazaguanine (CDG) to 7-cyano-7-deazaguanine (preQ(0)). The sequence is that of 7-cyano-7-deazaguanine synthase from Erythrobacter litoralis (strain HTCC2594).